The primary structure comprises 422 residues: Exopolygalacturonase clone GBGE184 (422 aa).

The first 31 residues, 1–31 (MANARSLVAKANNINVGSLILMALVFGSCVA), serve as a signal peptide directing secretion. 5 PbH1 repeats span residues 200–226 (TENV…HLSN), 227–248 (ADNV…SVGR), 250–270 (SNNV…SVGS), 280–301 (VSGI…RIKT), and 310–331 (AVDI…IIDQ). N-linked (GlcNAc...) asparagine glycosylation occurs at Asn229. The active-site Proton donor is Asp241. Residues Cys243 and Cys260 are joined by a disulfide bond. Asn252 carries an N-linked (GlcNAc...) asparagine glycan. Residue His264 is part of the active site. An N-linked (GlcNAc...) asparagine glycan is attached at Asn287. Disulfide bonds link Cys366/Cys372 and Cys404/Cys420.

The protein belongs to the glycosyl hydrolase 28 family.

It localises to the secreted. The protein localises to the cell wall. The enzyme catalyses [(1-&gt;4)-alpha-D-galacturonosyl](n) + H2O = alpha-D-galacturonate + [(1-&gt;4)-alpha-D-galacturonosyl](n-1). Its function is as follows. May function in depolymerizing pectin during pollen development, germination, and tube growth. Acts as an exo-polygalacturonase. The protein is Exopolygalacturonase clone GBGE184 (PGA3) of Arabidopsis thaliana (Mouse-ear cress).